Reading from the N-terminus, the 121-residue chain is Met-lysine-1a (121 aa).

A signal peptide spans 1 to 22 (MKSFVFALALIVAFACISESKS). The propeptide occupies 23–69 (DHTGYEEEENLEDSELTDLVTAALLEELAEASEMDDLSYTEEAGGER). Position 120 is a methionine amide (M120).

In terms of tissue distribution, expressed by the venom gland.

It localises to the secreted. In terms of biological role, shows no antimicrobial activity against Gram-positive bacterium B.subtilis B-501 or Gram-negative bacterium E.coli DH5-alpha at concentrations up to 20 ug/ml. Shows no toxicity towards insect (S.carnaria) larvae. The polypeptide is Met-lysine-1a (Lachesana tarabaevi (Spider)).